A 444-amino-acid chain; its full sequence is Tubulin beta chain (444 aa).

Residues glutamine 11, glutamate 68, serine 137, glycine 141, threonine 142, glycine 143, asparagine 203, and asparagine 225 each contribute to the GTP site. Position 68 (glutamate 68) interacts with Mg(2+). The disordered stretch occupies residues 424–444 (QDATAEEEGEFDEDEEMDEMM). A compositionally biased stretch (acidic residues) spans 427–444 (TAEEEGEFDEDEEMDEMM).

It belongs to the tubulin family. As to quaternary structure, dimer of alpha and beta chains. A typical microtubule is a hollow water-filled tube with an outer diameter of 25 nm and an inner diameter of 15 nM. Alpha-beta heterodimers associate head-to-tail to form protofilaments running lengthwise along the microtubule wall with the beta-tubulin subunit facing the microtubule plus end conferring a structural polarity. Microtubules usually have 13 protofilaments but different protofilament numbers can be found in some organisms and specialized cells. Requires Mg(2+) as cofactor.

It localises to the cytoplasm. Its subcellular location is the cytoskeleton. Tubulin is the major constituent of microtubules, a cylinder consisting of laterally associated linear protofilaments composed of alpha- and beta-tubulin heterodimers. Microtubules grow by the addition of GTP-tubulin dimers to the microtubule end, where a stabilizing cap forms. Below the cap, tubulin dimers are in GDP-bound state, owing to GTPase activity of alpha-tubulin. The protein is Tubulin beta chain of Achlya klebsiana.